A 93-amino-acid chain; its full sequence is Acylphosphatase (93 aa).

Residues 6–92 (RAHVWVGGKV…EGLTHFEVLR (87 aa)) form the Acylphosphatase-like domain. Catalysis depends on residues Arg21 and Asn39.

It belongs to the acylphosphatase family.

It catalyses the reaction an acyl phosphate + H2O = a carboxylate + phosphate + H(+). This chain is Acylphosphatase (acyP), found in Gloeobacter violaceus (strain ATCC 29082 / PCC 7421).